The following is a 146-amino-acid chain: Hemoglobin subunit beta (146 aa).

In terms of domain architecture, Globin spans 2–146 (EWTDFERATI…VVNSLGRQYH (145 aa)). Heme b is bound by residues His-63 and His-92.

It belongs to the globin family. In terms of assembly, heterotetramer of two alpha chains and two beta chains. Can form polymers. As to expression, red blood cells.

Functionally, involved in oxygen transport from gills to the various peripheral tissues. The protein is Hemoglobin subunit beta (hbb) of Chelidonichthys kumu (Bluefin gurnard).